The chain runs to 163 residues: Transcriptional repressor NrdR (163 aa).

A zinc finger spans residues 3–34 (CPFCRHDDSRVVDSRTTDDGSSIRRRRQCPNC). The ATP-cone domain occupies 46–136 (LSVIKRSGAP…VYQAFDSLAD (91 aa)).

Belongs to the NrdR family. The cofactor is Zn(2+).

Its function is as follows. Negatively regulates transcription of bacterial ribonucleotide reductase nrd genes and operons by binding to NrdR-boxes. The sequence is that of Transcriptional repressor NrdR from Kineococcus radiotolerans (strain ATCC BAA-149 / DSM 14245 / SRS30216).